The sequence spans 211 residues: Uridine kinase (211 aa).

Residue 13-20 coordinates ATP; that stretch reads GGTASGKT.

It belongs to the uridine kinase family.

The protein resides in the cytoplasm. The enzyme catalyses uridine + ATP = UMP + ADP + H(+). It carries out the reaction cytidine + ATP = CMP + ADP + H(+). It participates in pyrimidine metabolism; CTP biosynthesis via salvage pathway; CTP from cytidine: step 1/3. Its pathway is pyrimidine metabolism; UMP biosynthesis via salvage pathway; UMP from uridine: step 1/1. The chain is Uridine kinase from Thermus thermophilus (strain ATCC BAA-163 / DSM 7039 / HB27).